Reading from the N-terminus, the 574-residue chain is DNA polymerase alpha subunit B (574 aa).

It belongs to the DNA polymerase alpha subunit B family. As to quaternary structure, component of the alpha DNA polymerase complex (also known as the alpha DNA polymerase-primase complex) consisting of four subunits: the catalytic subunit pol1, the accessory subunit spb70/pol12, and the primase complex subunits spp1/pri1 and spp2/pri2 respectively. Interacts with orc1. Interacts with orc2; the interaction occurs on the chromatin, is stable thoughout the cell cycle and is independent from spb70 role in the alpha DNA polymerase complex. Phosphorylated in a cell cycle-dependent manner.

The protein resides in the nucleus. The protein localises to the chromosome. Functionally, accessory subunit of the DNA polymerase alpha complex (also known as the alpha DNA polymerase-primase complex) which plays an essential role in the initiation of DNA synthesis. During the S phase of the cell cycle, the DNA polymerase alpha complex (composed of a catalytic subunit pol1, an accessory subunit spb70/pol12 and two primase subunits, the catalytic subunit spp1/pri1 and the regulatory subunit spp2/pri2) is recruited to DNA at the replicative forks. The primase subunit of the polymerase alpha complex initiates DNA synthesis by oligomerising short RNA primers on both leading and lagging strands. The polypeptide is DNA polymerase alpha subunit B (Schizosaccharomyces pombe (strain 972 / ATCC 24843) (Fission yeast)).